Consider the following 412-residue polypeptide: tRNA (guanine-N(7)-)-methyltransferase non-catalytic subunit WDR4 (412 aa).

Ala-2 is subject to N-acetylalanine. 7 WD repeats span residues 3–40 (GSVG…IYDC), 50–90 (NKGE…LFRT), 94–131 (QCLS…SFSV), 137–174 (CGRL…VSWA), 180–218 (IESF…LWEY), 230–273 (ASLQ…IFQL), and 319–373 (PVGD…SYLK). The tract at residues 377-412 (ERLQQQLEKKQRRRSPPPGPDGHAKKMRPGEATLSC) is disordered. Phosphoserine occurs at positions 391 and 411.

It belongs to the WD repeat TRM82 family. In terms of assembly, non-catalytic component of the METTL1-WDR4 complex, composed of METTL1 and WDR4. Interacts with FEN1; the interaction is direct.

It is found in the nucleus. Its subcellular location is the chromosome. It functions in the pathway tRNA modification; N(7)-methylguanine-tRNA biosynthesis. In terms of biological role, non-catalytic component of the METTL1-WDR4 methyltransferase complex required for the formation of N(7)-methylguanine in a subset of RNA species, such as tRNAs, mRNAs and microRNAs (miRNAs). In the METTL1-WDR4 methyltransferase complex, WDR4 acts as a scaffold for tRNA-binding. Required for the formation of N(7)-methylguanine at position 46 (m7G46) in a large subset of tRNAs that contain the 5'-RAGGU-3' motif within the variable loop. M7G46 interacts with C13-G22 in the D-loop to stabilize tRNA tertiary structure and protect tRNAs from decay. Also required for the formation of N(7)-methylguanine at internal sites in a subset of mRNAs. Also required for methylation of a specific subset of miRNAs, such as let-7. Independently of METTL1, also plays a role in genome stability: localizes at the DNA replication site and regulates endonucleolytic activities of FEN1. This chain is tRNA (guanine-N(7)-)-methyltransferase non-catalytic subunit WDR4, found in Homo sapiens (Human).